A 140-amino-acid polypeptide reads, in one-letter code: Endoribonuclease YbeY (140 aa).

Zn(2+) is bound by residues His-100, His-104, and His-110.

This sequence belongs to the endoribonuclease YbeY family. Zn(2+) is required as a cofactor.

The protein localises to the cytoplasm. Its function is as follows. Single strand-specific metallo-endoribonuclease involved in late-stage 70S ribosome quality control and in maturation of the 3' terminus of the 16S rRNA. The sequence is that of Endoribonuclease YbeY from Helicobacter pylori (strain P12).